The following is a 339-amino-acid chain: Quinolinate synthase (339 aa).

Iminosuccinate is bound by residues His63 and Ser81. Cys126 serves as a coordination point for [4Fe-4S] cluster. Iminosuccinate contacts are provided by residues 152-154 (YVN) and Ser169. Cys211 provides a ligand contact to [4Fe-4S] cluster. Residues 237–239 (HPE) and Thr254 each bind iminosuccinate. Position 297 (Cys297) interacts with [4Fe-4S] cluster.

This sequence belongs to the quinolinate synthase family. Type 2 subfamily. [4Fe-4S] cluster is required as a cofactor.

Its subcellular location is the cytoplasm. It carries out the reaction iminosuccinate + dihydroxyacetone phosphate = quinolinate + phosphate + 2 H2O + H(+). It participates in cofactor biosynthesis; NAD(+) biosynthesis; quinolinate from iminoaspartate: step 1/1. Catalyzes the condensation of iminoaspartate with dihydroxyacetone phosphate to form quinolinate. The chain is Quinolinate synthase from Xylella fastidiosa (strain Temecula1 / ATCC 700964).